Here is a 360-residue protein sequence, read N- to C-terminus: Probable cinnamyl alcohol dehydrogenase 1 (360 aa).

Zn(2+) is bound at residue C47. T49 contacts NADP(+). Zn(2+) contacts are provided by H69, E70, C100, C103, C106, C114, and C163. NADP(+) is bound by residues T167, 189-194, 212-217, T252, G276, and 299-301; these read GLGGVG, SSSDKK, and SFI.

Belongs to the zinc-containing alcohol dehydrogenase family. Homodimer. Zn(2+) is required as a cofactor.

It carries out the reaction (E)-cinnamyl alcohol + NADP(+) = (E)-cinnamaldehyde + NADPH + H(+). The enzyme catalyses (E)-coniferol + NADP(+) = (E)-coniferaldehyde + NADPH + H(+). The catalysed reaction is (E)-sinapyl alcohol + NADP(+) = (E)-sinapaldehyde + NADPH + H(+). It catalyses the reaction (E)-4-coumaroyl alcohol + NADP(+) = (E)-4-coumaraldehyde + NADPH + H(+). It carries out the reaction (E)-caffeyl alcohol + NADP(+) = (E)-caffeyl aldehyde + NADPH + H(+). It functions in the pathway aromatic compound metabolism; phenylpropanoid biosynthesis. In terms of biological role, involved in lignin biosynthesis. Catalyzes the final step specific for the production of lignin monomers. Catalyzes the NADPH-dependent reduction of coniferaldehyde, 5-hydroxyconiferaldehyde, sinapaldehyde, 4-coumaraldehyde and caffeyl aldehyde to their respective alcohols. The sequence is that of Probable cinnamyl alcohol dehydrogenase 1 (CAD1) from Aralia cordata (Udo).